Consider the following 163-residue polypeptide: MRIEKCYFCSGPIYPGHGMMFVRNDCKVFRFCKSKCHKNFKKKRNPRKVRWTKAFRKAAGKELTVDNSFEFEKRRNEPIKYQRELWNKTIDAMKRVEEIKQKRQAKFIMNRLKKNKELQKVQDIKEVKQNIHLIRAPLAGKGKQLEEKMVQQLQEDVDMEDAP.

This sequence belongs to the eukaryotic ribosomal protein eL24 family. As to quaternary structure, associated with nucleolar and cytoplasmic pre-60S particles. At the end of biogenesis it dissociates from cytoplasmic pre-60S particles and is likely to be exchanged for its ribosomal homolog, RPL24.

Its subcellular location is the nucleus. The protein resides in the nucleolus. In terms of biological role, involved in the biogenesis of the 60S ribosomal subunit. Ensures the docking of GTPBP4/NOG1 to pre-60S particles. The polypeptide is Probable ribosome biogenesis protein RLP24 (RSL24D1) (Homo sapiens (Human)).